The following is a 262-amino-acid chain: Acyl-[acyl-carrier-protein]--UDP-N-acetylglucosamine O-acyltransferase (262 aa).

Belongs to the transferase hexapeptide repeat family. LpxA subfamily. As to quaternary structure, homotrimer.

Its subcellular location is the cytoplasm. The catalysed reaction is a (3R)-hydroxyacyl-[ACP] + UDP-N-acetyl-alpha-D-glucosamine = a UDP-3-O-[(3R)-3-hydroxyacyl]-N-acetyl-alpha-D-glucosamine + holo-[ACP]. It functions in the pathway glycolipid biosynthesis; lipid IV(A) biosynthesis; lipid IV(A) from (3R)-3-hydroxytetradecanoyl-[acyl-carrier-protein] and UDP-N-acetyl-alpha-D-glucosamine: step 1/6. Its function is as follows. Involved in the biosynthesis of lipid A, a phosphorylated glycolipid that anchors the lipopolysaccharide to the outer membrane of the cell. This chain is Acyl-[acyl-carrier-protein]--UDP-N-acetylglucosamine O-acyltransferase, found in Pasteurella multocida (strain Pm70).